The sequence spans 1394 residues: Ninein-like protein (1394 aa).

EF-hand domains are found at residues 8-43 (HYVS…LGLE) and 42-77 (LEEQ…VLSS). 2 disordered regions span residues 77-99 (SGSG…SCAV) and 126-166 (KYGS…KEPQ). At S149 the chain carries Phosphoserine. Basic and acidic residues predominate over residues 151–166 (ESLKSDEDAESAKEPQ). 2 EF-hand domains span residues 197-232 (TPEN…IGLH) and 234-269 (LEKQ…HEPP). Ca(2+) contacts are provided by D247, D249, D251, R253, and E258. Coiled coils occupy residues 382-423 (RQEL…MDDC), 461-515 (WEQA…DSEK), and 544-584 (EQFT…SRQS). The short motif at 494 to 496 (KEN) is the KEN box element. The tract at residues 578–602 (LPRSRQSPAGTPGTHRRRIPGRGPA) is disordered. The D-box signature appears at 632-640 (RMQLETKVN). A coiled-coil region spans residues 835–863 (EKEKLEQTYREQVEGLVQEADVLRALLKN). Residues 866 to 893 (TVVSDQQERTPSSMSLGPDSRQQPTARQ) show a composition bias toward polar residues. Residues 866 to 977 (TVVSDQQERT…SARTLTGQGQ (112 aa)) are disordered. Basic and acidic residues predominate over residues 939–951 (RSSENLGVRDNHQ). 2 coiled-coil regions span residues 1057 to 1229 (SESE…ELTE) and 1269 to 1331 (GARV…LRKQ).

In terms of assembly, interacts with gamma-tubulin and TUBGCP4. Interacts with anaphase promoting complex/cyclosome (APC/C). Interacts with CDC20 and FZR1. Interacts with LCA5 and USH2A. Post-translationally, phosphorylated by PLK1 which disrupts its centrosome association and interaction with gamma-tubulin. Ubiquitinated by the APC/C complex leading to its degradation.

The protein localises to the cytoplasm. The protein resides in the cytoskeleton. It is found in the microtubule organizing center. Its subcellular location is the centrosome. Involved in the microtubule organization in interphase cells. Overexpression induces the fragmentation of the Golgi, and causes lysosomes to disperse toward the cell periphery; it also interferes with mitotic spindle assembly. Involved in vesicle transport in photoreceptor cells. This Mus musculus (Mouse) protein is Ninein-like protein (Ninl).